Reading from the N-terminus, the 255-residue chain is D-aminoacyl-tRNA deacylase (255 aa).

It belongs to the DtdA deacylase family. Monomer. The cofactor is Zn(2+).

The enzyme catalyses a D-aminoacyl-tRNA + H2O = a tRNA + a D-alpha-amino acid + H(+). The catalysed reaction is glycyl-tRNA(Ala) + H2O = tRNA(Ala) + glycine + H(+). In terms of biological role, D-aminoacyl-tRNA deacylase with broad substrate specificity. By recycling D-aminoacyl-tRNA to D-amino acids and free tRNA molecules, this enzyme counteracts the toxicity associated with the formation of D-aminoacyl-tRNA entities in vivo. This is D-aminoacyl-tRNA deacylase from Methanocaldococcus jannaschii (strain ATCC 43067 / DSM 2661 / JAL-1 / JCM 10045 / NBRC 100440) (Methanococcus jannaschii).